The sequence spans 729 residues: Carbon monoxide dehydrogenase/acetyl-CoA synthase subunit alpha (729 aa).

[4Fe-4S] cluster is bound by residues Cys506, Cys509, Cys518, and Cys528. Cys509 is a binding site for Ni(2+). The Ni(2+) site is built by Cys595, Gly596, and Cys597.

Tetramer of two alpha and two beta chains. Requires Ni cation as cofactor. [4Fe-4S] cluster serves as cofactor.

The enzyme catalyses Co(I)-[corrinoid Fe-S protein] + acetyl-CoA + H(+) = methyl-Co(III)-[corrinoid Fe-S protein] + CO + CoA. In terms of biological role, the beta subunit generates CO from CO(2), while the alpha subunit (this protein) combines the CO with CoA and a methyl group to form acetyl-CoA. The methyl group, which is incorporated into acetyl-CoA, is transferred to the alpha subunit by a corrinoid iron-sulfur protein. This Moorella thermoacetica (Clostridium thermoaceticum) protein is Carbon monoxide dehydrogenase/acetyl-CoA synthase subunit alpha.